The primary structure comprises 204 residues: Probable nicotinate-nucleotide adenylyltransferase (204 aa).

The protein belongs to the NadD family.

The enzyme catalyses nicotinate beta-D-ribonucleotide + ATP + H(+) = deamido-NAD(+) + diphosphate. It participates in cofactor biosynthesis; NAD(+) biosynthesis; deamido-NAD(+) from nicotinate D-ribonucleotide: step 1/1. In terms of biological role, catalyzes the reversible adenylation of nicotinate mononucleotide (NaMN) to nicotinic acid adenine dinucleotide (NaAD). The protein is Probable nicotinate-nucleotide adenylyltransferase of Dehalococcoides mccartyi (strain ATCC BAA-2100 / JCM 16839 / KCTC 5957 / BAV1).